A 546-amino-acid chain; its full sequence is Arginine--tRNA ligase (546 aa).

Residues 117 to 127 (ANPTGPLHIGR) carry the 'HIGH' region motif.

The protein belongs to the class-I aminoacyl-tRNA synthetase family.

The protein localises to the cytoplasm. It carries out the reaction tRNA(Arg) + L-arginine + ATP = L-arginyl-tRNA(Arg) + AMP + diphosphate. In Thermoplasma acidophilum (strain ATCC 25905 / DSM 1728 / JCM 9062 / NBRC 15155 / AMRC-C165), this protein is Arginine--tRNA ligase.